The primary structure comprises 212 residues: Large ribosomal subunit protein uL3 (212 aa).

The disordered stretch occupies residues 133 to 152 (RGSMGHGSKYHRRPGSLGAK).

This sequence belongs to the universal ribosomal protein uL3 family. Part of the 50S ribosomal subunit. Forms a cluster with proteins L14 and L19.

One of the primary rRNA binding proteins, it binds directly near the 3'-end of the 23S rRNA, where it nucleates assembly of the 50S subunit. The sequence is that of Large ribosomal subunit protein uL3 from Syntrophomonas wolfei subsp. wolfei (strain DSM 2245B / Goettingen).